A 1054-amino-acid chain; its full sequence is Isoleucine--tRNA ligase (1054 aa).

The short motif at 58–68 (PFANGLPHYGH) is the 'HIGH' region element. Positions 627–631 (KMSKS) match the 'KMSKS' region motif. K630 is a binding site for ATP.

Belongs to the class-I aminoacyl-tRNA synthetase family. IleS type 2 subfamily. In terms of assembly, monomer. Zn(2+) is required as a cofactor.

It localises to the cytoplasm. It catalyses the reaction tRNA(Ile) + L-isoleucine + ATP = L-isoleucyl-tRNA(Ile) + AMP + diphosphate. Its function is as follows. Catalyzes the attachment of isoleucine to tRNA(Ile). As IleRS can inadvertently accommodate and process structurally similar amino acids such as valine, to avoid such errors it has two additional distinct tRNA(Ile)-dependent editing activities. One activity is designated as 'pretransfer' editing and involves the hydrolysis of activated Val-AMP. The other activity is designated 'posttransfer' editing and involves deacylation of mischarged Val-tRNA(Ile). The protein is Isoleucine--tRNA ligase of Corynebacterium efficiens (strain DSM 44549 / YS-314 / AJ 12310 / JCM 11189 / NBRC 100395).